The primary structure comprises 425 residues: Gamma-glutamyl phosphate reductase (425 aa).

This sequence belongs to the gamma-glutamyl phosphate reductase family.

Its subcellular location is the cytoplasm. The catalysed reaction is L-glutamate 5-semialdehyde + phosphate + NADP(+) = L-glutamyl 5-phosphate + NADPH + H(+). The protein operates within amino-acid biosynthesis; L-proline biosynthesis; L-glutamate 5-semialdehyde from L-glutamate: step 2/2. Functionally, catalyzes the NADPH-dependent reduction of L-glutamate 5-phosphate into L-glutamate 5-semialdehyde and phosphate. The product spontaneously undergoes cyclization to form 1-pyrroline-5-carboxylate. The polypeptide is Gamma-glutamyl phosphate reductase (Xylella fastidiosa (strain M23)).